Reading from the N-terminus, the 249-residue chain is 5'-nucleotidase SurE (249 aa).

Residues D8, D9, S39, and N91 each contribute to the a divalent metal cation site.

Belongs to the SurE nucleotidase family. Requires a divalent metal cation as cofactor.

It is found in the cytoplasm. It carries out the reaction a ribonucleoside 5'-phosphate + H2O = a ribonucleoside + phosphate. Its function is as follows. Nucleotidase that shows phosphatase activity on nucleoside 5'-monophosphates. This Vesicomyosocius okutanii subsp. Calyptogena okutanii (strain HA) protein is 5'-nucleotidase SurE.